Here is an 89-residue protein sequence, read N- to C-terminus: Small ribosomal subunit protein bS16 (89 aa).

The protein belongs to the bacterial ribosomal protein bS16 family.

The protein is Small ribosomal subunit protein bS16 of Chloroflexus aggregans (strain MD-66 / DSM 9485).